We begin with the raw amino-acid sequence, 606 residues long: Lysosomal cobalamin transporter ABCD4 (606 aa).

The 294-residue stretch at asparagine 39–threonine 332 folds into the ABC transmembrane type-1 domain. Helical transmembrane passes span phenylalanine 43–isoleucine 63, leucine 76–leucine 96, isoleucine 190–methionine 210, tyrosine 279–glycine 299, and alanine 314–leucine 334. Residues leucine 389–isoleucine 603 form the ABC transporter domain. Position 421-428 (glycine 421–threonine 428) interacts with ATP.

Belongs to the ABC transporter superfamily. ABCD family. Peroxisomal fatty acyl CoA transporter (TC 3.A.1.203) subfamily. In terms of assembly, homodimer or heterodimer. Interacts with LMBRD1; this interaction induces the translocation of ABCD4 from the ER to the lysosome membrane. Interacts with LMBRD1 and MMACHC; this interaction ensures the transport of cobalamin from the lysosome to the cytosol. In terms of tissue distribution, ubiquitous.

Its subcellular location is the endoplasmic reticulum membrane. The protein resides in the lysosome membrane. It catalyses the reaction an R-cob(III)alamin(out) + ATP + H2O = an R-cob(III)alamin(in) + ADP + phosphate + H(+). Its function is as follows. Lysosomal membrane protein that transports cobalamin (Vitamin B12) from the lysosomal lumen to the cytosol in an ATP-dependent manner. Targeted by LMBRD1 lysosomal chaperone from the endoplasmic reticulum to the lysosomal membrane. Then forms a complex with lysosomal chaperone LMBRD1 and cytosolic MMACHC to transport cobalamin across the lysosomal membrane. This chain is Lysosomal cobalamin transporter ABCD4, found in Homo sapiens (Human).